A 1025-amino-acid chain; its full sequence is Leucyl-cystinyl aminopeptidase (1025 aa).

At methionine 1 the chain carries N-acetylmethionine. The Cytoplasmic portion of the chain corresponds to 1-110 (MEPFTNDRLQ…GACSVPSART (110 aa)). The Dileucine internalization motif signature appears at 53 to 54 (LL). Tyrosine 70 carries the post-translational modification Phosphotyrosine. Positions 76–77 (LL) match the Dileucine internalization motif motif. A phosphoserine mark is found at serine 80 and serine 91. A tankyrase binding region spans residues 96 to 101 (RQSPDG). A helical; Signal-anchor for type II membrane protein membrane pass occupies residues 111 to 131 (MVVCAFVIVVAVSVIMVIYLL). The Extracellular portion of the chain corresponds to 132–1025 (PRCTFTKEGC…KNLKSLTWWL (894 aa)). Residues asparagine 145, asparagine 184, asparagine 215, asparagine 256, and asparagine 266 are each glycosylated (N-linked (GlcNAc...) asparagine). Residue glutamate 295 participates in substrate binding. Residues asparagine 368 and asparagine 374 are each glycosylated (N-linked (GlcNAc...) asparagine). A substrate-binding site is contributed by 428-432 (GAMEN). An N-linked (GlcNAc...) asparagine glycan is attached at asparagine 448. Histidine 464 serves as a coordination point for Zn(2+). The active-site Proton acceptor is glutamate 465. The Zn(2+) site is built by histidine 468 and glutamate 487. Residues asparagine 525, asparagine 578, asparagine 598, asparagine 664, asparagine 682, asparagine 760, asparagine 834, asparagine 850, and asparagine 989 are each glycosylated (N-linked (GlcNAc...) asparagine).

This sequence belongs to the peptidase M1 family. As to quaternary structure, homodimer. Binds tankyrases 1 and 2. The cofactor is Zn(2+). In terms of processing, the pregnancy serum form is derived from the membrane-bound form by proteolytic processing. Post-translationally, N-glycosylated. Highly expressed in placenta, heart, kidney and small intestine. Detected at lower levels in neuronal cells in the brain, in skeletal muscle, spleen, liver, testes and colon.

Its subcellular location is the cell membrane. The protein resides in the secreted. The enzyme catalyses Release of an N-terminal amino acid, Cys-|-Xaa-, in which the half-cystine residue is involved in a disulfide loop, notably in oxytocin or vasopressin. Hydrolysis rates on a range of aminoacyl arylamides exceed that for the cystinyl derivative, however.. Its function is as follows. Release of an N-terminal amino acid, cleaves before cysteine, leucine as well as other amino acids. Degrades peptide hormones such as oxytocin, vasopressin and angiotensin III, and plays a role in maintaining homeostasis during pregnancy. May be involved in the inactivation of neuronal peptides in the brain. Cleaves Met-enkephalin and dynorphin. Binds angiotensin IV and may be the angiotensin IV receptor in the brain. The chain is Leucyl-cystinyl aminopeptidase (LNPEP) from Homo sapiens (Human).